A 556-amino-acid polypeptide reads, in one-letter code: Cell wall integrity and stress response component 3 (556 aa).

A signal peptide spans 1–38; it reads MERVWFAKLTNKGTIKIGYISFILLSLLCQSLIGLVNA. Residues 39 to 132 enclose the WSC domain; sequence DFNYEGCYSA…SSYMNVYVNA (94 aa). Over 39 to 384 the chain is Extracellular; that stretch reads DFNYEGCYSA…QRLSGGAIAG (346 aa). N-linked (GlcNAc...) asparagine glycosylation occurs at N84. 2 stretches are compositionally biased toward low complexity: residues 142 to 169 and 184 to 257; these read SSSK…SSTT and TTVS…STTS. 2 disordered regions span residues 142–257 and 269–312; these read SSSK…STTS and TLSS…PSTS. N367 and N370 each carry an N-linked (GlcNAc...) asparagine glycan. A helical membrane pass occupies residues 385–405; sequence IVIGVVFGVIFIILILLFLIW. Topologically, residues 406-556 are cytoplasmic; it reads RRRKSHDQLD…LSSTVSHNRA (151 aa). Disordered regions lie at residues 425–444 and 534–556; these read YSFG…SGTT and LQVV…HNRA. The span at 546–556 shows a compositional bias: polar residues; that stretch reads ELSSTVSHNRA.

Its subcellular location is the membrane. This Saccharomyces cerevisiae (strain ATCC 204508 / S288c) (Baker's yeast) protein is Cell wall integrity and stress response component 3 (WSC3).